Reading from the N-terminus, the 709-residue chain is SH3 domain-containing kinase-binding protein 1 (709 aa).

SH3 domains are found at residues 1-58 (MVEA…EIKK) and 98-157 (RRRR…ELSG). 4 positions are modified to phosphoserine: Ser156, Ser159, Ser227, and Ser274. Residues 221–239 (ETTGSESDGGDSSSTKSEG) are compositionally biased toward low complexity. A disordered region spans residues 221-242 (ETTGSESDGGDSSSTKSEGANG). Disordered regions lie at residues 289 to 309 (GKKL…MDSR), 372 to 485 (SDFD…KIDL), and 511 to 650 (DSVI…VSSQ). A Phosphothreonine modification is found at Thr298. Residues 311 to 372 (KTKDYCKVIF…PDNFVKLLPS (62 aa)) form the SH3 3 domain. The span at 399 to 434 (TERKHEIKKIPPERPETLPNRTEEKERPEREPKLDL) shows a compositional bias: basic and acidic residues. Ser480 is subject to Phosphoserine. Polar residues predominate over residues 513–528 (VISSTEKLSHPTTSRP). The segment covering 535–554 (PPSQSLTSSSLSSPDIFDSP) has biased composition (low complexity). Phosphoserine occurs at positions 553, 555, and 565. Positions 561–575 (EEHISLAHRGIDVSK) are enriched in basic and acidic residues. The segment covering 579-592 (KTVTISQVSDNKTS) has biased composition (polar residues). Residues 600–623 (MAAASSGPASLSSVASSPMSSSLG) are compositionally biased toward low complexity. A compositionally biased stretch (polar residues) spans 627–636 (QRASSPSLFS). Residue Ser631 is modified to Phosphoserine. The stretch at 646-708 (AVSSQAAIEE…VNDIKKALQS (63 aa)) forms a coiled coil.

In terms of assembly, can self-associate and form homotetramers. Interacts with CD2, F-actin capping protein, PIK3R3, GRB2, EGFR, MET, BLNK, MAP3K4, PDCD6IP, SPRY2, ARHGAP17, ARHGAP27, CRK, BCAR1, SOS1, ASAP1, ARAP3, HIP1R, SYNJ2, INPP5D and STAP1. Interacts with E3 ubiquitin-protein ligase CBL. Interacts with CBLB, but does not interact with CBLC. Two molecules of SH3KBP1 seem to bind through their respective SH3 1 domain to one molecule of CBLB. The interaction with CBL or CBLB and EGFR is increased upon EGF stimulation. The interaction with CBL is attenuated by PDCD6IP. Interacts (via SH3 domains) with ARAP1. The interaction is independent of EGF and does not affect ARAP1 GTPase-activating activity but is involved in regulating ubiquitination and endocytic trafficking of EGFR. ARAP1 competes with CBL for binding to SH3KBP1 and prevents interaction of CBL with SH3KBP1; this is likely to regulate SH3KBP1-mediated internalization of EGFR. Interacts through its proline-rich region with the SH3 domain of endophilins SH3GL1, SH3GL2 and SH3GL3. The SH3KBP1-endophilin complex seems to associate with a complex containing the phosphorylated receptor (EGFR or MET) and phosphorylated CBL. Probably associates with ASAP1 and phosphorylated EGFR. Probably part of a complex consisting of at least SH3KBP1, ASAP1 and ARAP3. Interacts with focal adhesion kinases PTK2/FAK1 and PTK2B/PYK2, probably as a dimer. Interacts with DAB2 and probably associates with chathrin through its interaction with DAB2. Part of a complex consisting of SH3KBP1, DAB2, and clathrin heavy chain. DAB2 and clathrin dissociate from SH3KBP1 following growth factor treatment, enabling interaction with CBL. Interacts with DDN and probably associates with MAGI2 through its interaction with DDN. Interacts with the SH3 domains of SRC tyrosine-protein kinases SRC, LCK, LYN, FGR, FYN and HCK. Interacts with TRADD, BIRC2, TRAF1, TRAF2 and TNFR1, and the association with a TNFR1-associated complex upon stimulation with TNF-alpha seems to be mediated by SRC. Probably part of a complex consisting of at least SH3KBP1, ASAP1 and ARAP3. Interacts (via SH3 domains) with SHKBP1 (via PXXXPR motifs). Interacts with ATX2. Interaction with CBL is abolished in the presence of SHKBP1. Interacts (via SH3 domains) with ZFP36 (via extreme C-terminal region). Interacts with MAP3K4; this interaction enhances the association with ZFP36. Post-translationally, monoubiquitinated by CBL and CBLB after EGF stimulation; probably on its C-terminus.

It is found in the cytoplasm. The protein localises to the cytoskeleton. Its subcellular location is the cytoplasmic vesicle membrane. The protein resides in the synapse. It localises to the synaptosome. It is found in the cell junction. The protein localises to the focal adhesion. Its function is as follows. Adapter protein involved in regulating diverse signal transduction pathways. Involved in the regulation of endocytosis and lysosomal degradation of ligand-induced receptor tyrosine kinases, including EGFR and MET/hepatocyte growth factor receptor, through an association with CBL and endophilins. The association with CBL, and thus the receptor internalization, may be inhibited by an interaction with PDCD6IP and/or SPRY2. Involved in regulation of ligand-dependent endocytosis of the IgE receptor. Attenuates phosphatidylinositol 3-kinase activity by interaction with its regulatory subunit. May be involved in regulation of cell adhesion; promotes the interaction between TTK2B and PDCD6IP. May be involved in the regulation of cellular stress response via the MAPK pathways through its interaction with MAP3K4. Is involved in modulation of tumor necrosis factor mediated apoptosis. Plays a role in the regulation of cell morphology and cytoskeletal organization. Required in the control of cell shape and migration. Has an essential role in the stimulation of B cell activation. The protein is SH3 domain-containing kinase-binding protein 1 (Sh3kbp1) of Mus musculus (Mouse).